The sequence spans 291 residues: MFIIELIKGIILGVVEGLTEFAPVSSTGHMILVDDMWLKSSEFLGSQSAFTFKIVIQLGSVFAAAWVFRERFLEILHIGKHKHVEGENDQQRRSKPRRLNLLHVLVGMVPAGILGLLFDDFIEEHLFSVPTVMIGLFVGAIYMIIADKYSVKVKNPQTVDQINYFQAFVIGISQAVAMWPGFSRSGSTISTGVLMKLNHKAASDFTFIMAVPIMLAASGLSLLKHYQDIQIADIPFYILGFLAAFTVGLIAIKTFLHLSNKIKLIPFAIYRIVLVIFIAILYFGFGIGKGI.

The next 8 membrane-spanning stretches (helical) occupy residues 1–21 (MFIIELIKGIILGVVEGLTEF), 48–68 (SAFTFKIVIQLGSVFAAAWVF), 102–122 (LHVLVGMVPAGILGLLFDDFI), 126–146 (LFSVPTVMIGLFVGAIYMIIA), 162–182 (INYFQAFVIGISQAVAMWPGF), 203–223 (SDFTFIMAVPIMLAASGLSLL), 231–251 (IADIPFYILGFLAAFTVGLIA), and 267–287 (FAIYRIVLVIFIAILYFGFGI).

The protein belongs to the UppP family.

It is found in the cell membrane. It catalyses the reaction di-trans,octa-cis-undecaprenyl diphosphate + H2O = di-trans,octa-cis-undecaprenyl phosphate + phosphate + H(+). Catalyzes the dephosphorylation of undecaprenyl diphosphate (UPP). Confers resistance to bacitracin. Is also required for virulence. In Staphylococcus aureus, this protein is Undecaprenyl-diphosphatase (uppP).